A 219-amino-acid polypeptide reads, in one-letter code: Factor in the germline alpha (219 aa).

The bHLH domain occupies 65–117 (ERRRVANAKERERIKNLNRGFARLKALVPFLPQSRKPSKVDILKGATEYIQVL). The tract at residues 124–151 (AKDSKKQDPDEQSYSNNSSESHTSSARQ) is disordered. Low complexity predominate over residues 136–148 (SYSNNSSESHTSS).

In terms of assembly, heterodimer with TCF3/isoform E12. In terms of tissue distribution, germ cells. Expressed in the fetal ovary, but not by a range of other tissues. Expression increases across mid-gestation, rising some 40-fold by the time of primordial follicle formation.

It localises to the nucleus. In terms of biological role, germline specific transcription factor implicated in postnatal oocyte-specific gene expression. Plays a key regulatory role in the expression of multiple oocyte-specific genes, including those that initiate folliculogenesis and those that encode the zona pellucida (ZP1, ZP2 and ZP3) required for fertilization and early embryonic survival. Essential for oocytes to survive and form primordial follicles. The persistence of FIGLA in adult females suggests that it may regulate additional pathways that are essential for normal ovarian development. Binds to the E-box (5'-CANNTG-3') of the ZPs (ZP1, ZP2, ZP3) promoters. In Homo sapiens (Human), this protein is Factor in the germline alpha (FIGLA).